A 723-amino-acid chain; its full sequence is Solute carrier organic anion transporter family member 4A1 (723 aa).

Over 1–102 (MPQHAMGDTH…KCLQVFNTPK (102 aa)) the chain is Cytoplasmic. Positions 23–64 (SSATDSGCDTPPSSRASPASLRSAHGTLGSSSQPLFEPQAEK) are disordered. The segment covering 33 to 46 (PPSSRASPASLRSA) has biased composition (low complexity). Phosphoserine is present on residues Ser39, Ser42, and Ser45. Residues 103–123 (GFLFFLCAASFLQGMTVNGFI) traverse the membrane as a helical segment. Over 124-142 (NTVITSIERRFDLHSYQSG) the chain is Extracellular. The helical transmembrane segment at 143-163 (LIASSYDIAACLCLTFVSYFG) threads the bilayer. The Cytoplasmic portion of the chain corresponds to 164-169 (GNGHKP). A helical membrane pass occupies residues 170-194 (RWLGWGVLVLGIGSLVFALPHFTAG). The Extracellular segment spans residues 195 to 224 (RYEVEMDEGLGTGTCLTNQSHVECKDSASG). Asn212 is a glycosylation site (N-linked (GlcNAc...) asparagine). Residues 225–255 (LSNYRLIFMLGQLLHGVGATPLYTLGVTYLD) form a helical membrane-spanning segment. Topologically, residues 256–274 (ENVKSSYSPIYIAIFYTAA) are cytoplasmic. The helical transmembrane segment at 275–295 (ILGPAAGYLIGGAMLNVYTEV) threads the bilayer. The Extracellular segment spans residues 296–309 (GQRTELTTDSPLWV). A helical membrane pass occupies residues 310 to 334 (GAWWIGFLGTGIAAFLIAIPILGYP). At 335–380 (RQLPGSQRYVVMRAAETQQLKDHSRGAVSNPAFGKTVRDLPLSIWL) the chain is on the cytoplasmic side. The chain crosses the membrane as a helical span at residues 381-402 (LLRNPTFILLCLAGATEATLIA). Residues 403–422 (GMSTFGPKFFEAQFSLSASE) lie on the Extracellular side of the membrane. Residues 423-446 (AATLFGYLVVPAGGGGTLLGGFLV) form a helical membrane-spanning segment. Residues 447 to 450 (NKFK) are Cytoplasmic-facing. Residues 451 to 473 (LRGSGIIRFCLFCTLTSLLAFFV) traverse the membrane as a helical segment. The Extracellular segment spans residues 474-582 (FLMHCPNVHM…ASTCQSKPFL (109 aa)). Positions 500 to 557 (LDLKAACNAIYCCQPKHYSPLCGSDGTMYYSPCYAGCPADAETDLGGQKVYRGCSCIL) constitute a Kazal-like domain. 2 disulfide bridges follow: Cys506–Cys536 and Cys521–Cys555. The N-linked (GlcNAc...) asparagine glycan is linked to Asn566. Residues 583-605 (LVLVFVVIIFTFLSSIPALTATL) form a helical membrane-spanning segment. The Cytoplasmic segment spans residues 606–614 (RCVSDRQRS). The chain crosses the membrane as a helical span at residues 615–640 (FALGIQWIVVRTLGSIPGPIAFGWVI). Over 641–673 (DKACLLWQDQCGHQGSCFVYENEAMSRYMLIAG) the chain is Extracellular. A helical transmembrane segment spans residues 674 to 691 (LTFKVLGFLFFVAAYFLY). Residues 692–723 (KSPSVSSDGLEASLPSQSSASDSPTEQLQSNV) are Cytoplasmic-facing. Residues 700 to 723 (GLEASLPSQSSASDSPTEQLQSNV) are disordered. Positions 701–723 (LEASLPSQSSASDSPTEQLQSNV) are enriched in low complexity.

This sequence belongs to the organo anion transporter (TC 2.A.60) family.

The protein localises to the cell membrane. It carries out the reaction 3,3',5-triiodo-L-thyronine(out) + L-glutamate(in) = 3,3',5-triiodo-L-thyronine(in) + L-glutamate(out). It catalyses the reaction L-thyroxine(out) + L-glutamate(in) = L-thyroxine(in) + L-glutamate(out). The catalysed reaction is estrone 3-sulfate(out) + L-glutamate(in) = estrone 3-sulfate(in) + L-glutamate(out). The enzyme catalyses taurocholate(out) + L-glutamate(in) = taurocholate(in) + L-glutamate(out). It carries out the reaction 3,3',5-triiodo-L-thyronine(out) = 3,3',5-triiodo-L-thyronine(in). It catalyses the reaction L-thyroxine(out) = L-thyroxine(in). The catalysed reaction is 3,3',5'-triiodo-L-thyronine(out) = 3,3',5'-triiodo-L-thyronine(in). The enzyme catalyses estrone 3-sulfate(out) = estrone 3-sulfate(in). It carries out the reaction 17beta-estradiol 17-O-(beta-D-glucuronate)(out) = 17beta-estradiol 17-O-(beta-D-glucuronate)(in). It catalyses the reaction taurocholate(out) = taurocholate(in). The catalysed reaction is prostaglandin E2(out) = prostaglandin E2(in). In terms of biological role, organic anion antiporter with apparent broad substrate specificity. Recognizes various substrates including thyroid hormones 3,3',5-triiodo-L-thyronine (T3), L-thyroxine (T4) and 3,3',5'-triiodo-L-thyronine (rT3), conjugated steroids such as estrone 3-sulfate and estradiol 17-beta glucuronide, bile acids such as taurocholate and prostanoids such as prostaglandin E2, likely operating in a tissue-specific manner. May be involved in uptake of metabolites from the circulation into organs such as kidney, liver or placenta. Possibly drives the selective transport of thyroid hormones and estrogens coupled to an outward glutamate gradient across the microvillous membrane of the placenta. The transport mechanism, its electrogenicity and potential tissue-specific counterions remain to be elucidated. This is Solute carrier organic anion transporter family member 4A1 (Slco4a1) from Mus musculus (Mouse).